A 188-amino-acid polypeptide reads, in one-letter code: Elongation factor P (188 aa).

An N6-(3,6-diaminohexanoyl)-5-hydroxylysine modification is found at lysine 34.

This sequence belongs to the elongation factor P family. In terms of processing, may be beta-lysylated on the epsilon-amino group of Lys-34 by the combined action of EpmA and EpmB, and then hydroxylated on the C5 position of the same residue by EpmC (if this protein is present). Lysylation is critical for the stimulatory effect of EF-P on peptide-bond formation. The lysylation moiety may extend toward the peptidyltransferase center and stabilize the terminal 3-CCA end of the tRNA. Hydroxylation of the C5 position on Lys-34 may allow additional potential stabilizing hydrogen-bond interactions with the P-tRNA.

It localises to the cytoplasm. It participates in protein biosynthesis; polypeptide chain elongation. Its function is as follows. Involved in peptide bond synthesis. Alleviates ribosome stalling that occurs when 3 or more consecutive Pro residues or the sequence PPG is present in a protein, possibly by augmenting the peptidyl transferase activity of the ribosome. Modification of Lys-34 is required for alleviation. This Enterobacter sp. (strain 638) protein is Elongation factor P.